The sequence spans 36 residues: Photosystem I reaction center subunit VIII (36 aa).

The helical transmembrane segment at 6-28 threads the bilayer; sequence LPSIFVPLVGLLFPAIAMVSLFF.

The protein belongs to the PsaI family.

Its subcellular location is the plastid. It is found in the chloroplast thylakoid membrane. May help in the organization of the PsaL subunit. In Nymphaea alba (White water-lily), this protein is Photosystem I reaction center subunit VIII.